Here is a 244-residue protein sequence, read N- to C-terminus: Ribonuclease PH (244 aa).

Residues Arg86 and 124-126 (GTR) each bind phosphate.

The protein belongs to the RNase PH family. As to quaternary structure, homohexameric ring arranged as a trimer of dimers.

It carries out the reaction tRNA(n+1) + phosphate = tRNA(n) + a ribonucleoside 5'-diphosphate. In terms of biological role, phosphorolytic 3'-5' exoribonuclease that plays an important role in tRNA 3'-end maturation. Removes nucleotide residues following the 3'-CCA terminus of tRNAs; can also add nucleotides to the ends of RNA molecules by using nucleoside diphosphates as substrates, but this may not be physiologically important. Probably plays a role in initiation of 16S rRNA degradation (leading to ribosome degradation) during starvation. This Oceanobacillus iheyensis (strain DSM 14371 / CIP 107618 / JCM 11309 / KCTC 3954 / HTE831) protein is Ribonuclease PH.